The sequence spans 85 residues: U4-theraphotoxin-Hhn1c (85 aa).

Residues 1 to 22 form the signal peptide; that stretch reads MKVTLIAIVTCAAVLVLHTTAA. Residues 23–48 constitute a propeptide that is removed on maturation; it reads EELEAESQLMEVGMPDTELAAVDEER. 3 cysteine pairs are disulfide-bonded: Cys-52–Cys-66, Cys-56–Cys-77, and Cys-71–Cys-82.

This sequence belongs to the neurotoxin 12 (Hwtx-2) family. 02 (Hwtx-2) subfamily. In terms of tissue distribution, expressed by the venom gland.

The protein localises to the secreted. Functionally, postsynaptic neurotoxin. This chain is U4-theraphotoxin-Hhn1c, found in Cyriopagopus hainanus (Chinese bird spider).